The primary structure comprises 218 residues: MPMILGYWNVRGLTHPIRMLLEYTDSSYDEKRYTMGDAPDFDRSQWLNEKFKLGLDFPNLPYLIDGSHKITQSNAILRYLARKHHLDGETEEERIRADIVENQVMDTRMQLIMLCYNPDFEKQKPEFLKTIPEKMKLYSEFLGKRPWFAGDKVTYVDFLAYDILDQYRMFEPKCLDAFPNLRDFLARFEGLKKISAYMKSSRYIATPIFSKMAHWSNK.

Residues 2–88 enclose the GST N-terminal domain; the sequence is PMILGYWNVR…YLARKHHLDG (87 aa). 7–8 is a glutathione binding site; that stretch reads YW. T34 is subject to Phosphothreonine. Residues 43 to 46, K50, and 59 to 60 each bind glutathione; these read RSQW and NL. S67 carries the phosphoserine modification. 72–73 lines the glutathione pocket; that stretch reads QS. The GST C-terminal domain maps to 90 to 208; that stretch reads TEEERIRADI…KSSRYIATPI (119 aa). Y116 lines the substrate pocket. At S210 the chain carries Phosphoserine.

As to quaternary structure, homodimer.

The protein resides in the cytoplasm. It carries out the reaction RX + glutathione = an S-substituted glutathione + a halide anion + H(+). The enzyme catalyses prostaglandin A2 + glutathione = prostaglandin A2-S-(R)-glutathione. The catalysed reaction is prostaglandin J2 + glutathione = prostaglandin J2-S-(R)-glutathione. It catalyses the reaction prostaglandin J2 + glutathione = prostaglandin J2-S-(S)-glutathione. It carries out the reaction prostaglandin A2 + glutathione = prostaglandin A2-S-(S)-glutathione. The enzyme catalyses 11(S)-hydroxy-14(S),15(S)-epoxy-(5Z,8Z,12E)-eicosatrienoate + glutathione = (11S,15S)-dihydroxy-14(R)-S-glutathionyl-(5Z,8Z,12E)-eicosatrienoate. In terms of biological role, conjugation of reduced glutathione to a wide number of exogenous and endogenous hydrophobic electrophiles. Involved in the formation of glutathione conjugates of both prostaglandin A2 (PGA2) and prostaglandin J2 (PGJ2). Participates in the formation of novel hepoxilin regioisomers. The sequence is that of Glutathione S-transferase Mu 1 from Mus musculus (Mouse).